A 357-amino-acid polypeptide reads, in one-letter code: Holliday junction branch migration complex subunit RuvB (357 aa).

Residues 1–27 (MGRFSNADGPGDDADEREVTPALTVGE) are disordered. Residues 1 to 195 (MGRFSNADGP…FGFTAHMDFY (195 aa)) form a large ATPase domain (RuvB-L) region. ATP-binding positions include L34, R35, G76, K79, T80, S81, 142-144 (EDF), R185, Y195, and R232. A Mg(2+)-binding site is contributed by T80. Residues 196–266 (EPAELERVLA…IAKYALEVYD (71 aa)) form a small ATPAse domain (RuvB-S) region. Residues 269-357 (ELGLDRLDRA…GGLGQVGLFE (89 aa)) are head domain (RuvB-H). 2 residues coordinate DNA: R324 and R329.

The protein belongs to the RuvB family. Homohexamer. Forms an RuvA(8)-RuvB(12)-Holliday junction (HJ) complex. HJ DNA is sandwiched between 2 RuvA tetramers; dsDNA enters through RuvA and exits via RuvB. An RuvB hexamer assembles on each DNA strand where it exits the tetramer. Each RuvB hexamer is contacted by two RuvA subunits (via domain III) on 2 adjacent RuvB subunits; this complex drives branch migration. In the full resolvosome a probable DNA-RuvA(4)-RuvB(12)-RuvC(2) complex forms which resolves the HJ.

The protein localises to the cytoplasm. The enzyme catalyses ATP + H2O = ADP + phosphate + H(+). In terms of biological role, the RuvA-RuvB-RuvC complex processes Holliday junction (HJ) DNA during genetic recombination and DNA repair, while the RuvA-RuvB complex plays an important role in the rescue of blocked DNA replication forks via replication fork reversal (RFR). RuvA specifically binds to HJ cruciform DNA, conferring on it an open structure. The RuvB hexamer acts as an ATP-dependent pump, pulling dsDNA into and through the RuvAB complex. RuvB forms 2 homohexamers on either side of HJ DNA bound by 1 or 2 RuvA tetramers; 4 subunits per hexamer contact DNA at a time. Coordinated motions by a converter formed by DNA-disengaged RuvB subunits stimulates ATP hydrolysis and nucleotide exchange. Immobilization of the converter enables RuvB to convert the ATP-contained energy into a lever motion, pulling 2 nucleotides of DNA out of the RuvA tetramer per ATP hydrolyzed, thus driving DNA branch migration. The RuvB motors rotate together with the DNA substrate, which together with the progressing nucleotide cycle form the mechanistic basis for DNA recombination by continuous HJ branch migration. Branch migration allows RuvC to scan DNA until it finds its consensus sequence, where it cleaves and resolves cruciform DNA. The sequence is that of Holliday junction branch migration complex subunit RuvB from Mycolicibacterium gilvum (strain PYR-GCK) (Mycobacterium gilvum (strain PYR-GCK)).